Consider the following 89-residue polypeptide: Small ribosomal subunit protein uS17 (89 aa).

It belongs to the universal ribosomal protein uS17 family. Part of the 30S ribosomal subunit.

Its function is as follows. One of the primary rRNA binding proteins, it binds specifically to the 5'-end of 16S ribosomal RNA. The chain is Small ribosomal subunit protein uS17 from Aromatoleum aromaticum (strain DSM 19018 / LMG 30748 / EbN1) (Azoarcus sp. (strain EbN1)).